The primary structure comprises 245 residues: tRNA pseudouridine synthase A (245 aa).

Residue Asp-52 is the Nucleophile of the active site. Residue Tyr-111 coordinates substrate.

Belongs to the tRNA pseudouridine synthase TruA family. As to quaternary structure, homodimer.

The catalysed reaction is uridine(38/39/40) in tRNA = pseudouridine(38/39/40) in tRNA. In terms of biological role, formation of pseudouridine at positions 38, 39 and 40 in the anticodon stem and loop of transfer RNAs. The polypeptide is tRNA pseudouridine synthase A (Thermotoga sp. (strain RQ2)).